Here is a 91-residue protein sequence, read N- to C-terminus: Small ribosomal subunit protein uS17 (91 aa).

This sequence belongs to the universal ribosomal protein uS17 family. In terms of assembly, part of the 30S ribosomal subunit.

Functionally, one of the primary rRNA binding proteins, it binds specifically to the 5'-end of 16S ribosomal RNA. In Saccharopolyspora erythraea (strain ATCC 11635 / DSM 40517 / JCM 4748 / NBRC 13426 / NCIMB 8594 / NRRL 2338), this protein is Small ribosomal subunit protein uS17.